The sequence spans 142 residues: Large ribosomal subunit protein uL11 (142 aa).

Belongs to the universal ribosomal protein uL11 family. As to quaternary structure, part of the ribosomal stalk of the 50S ribosomal subunit. Interacts with L10 and the large rRNA to form the base of the stalk. L10 forms an elongated spine to which L12 dimers bind in a sequential fashion forming a multimeric L10(L12)X complex. Post-translationally, one or more lysine residues are methylated.

Functionally, forms part of the ribosomal stalk which helps the ribosome interact with GTP-bound translation factors. This Mycobacterium sp. (strain MCS) protein is Large ribosomal subunit protein uL11.